We begin with the raw amino-acid sequence, 380 residues long: Flap endonuclease 1 (380 aa).

Residues 1–104 (MGIQGLAKLI…GELAKRSERR (104 aa)) form an N-domain region. The residue at position 19 (Arg19) is a Symmetric dimethylarginine; by PRMT5. Residue Asp34 participates in Mg(2+) binding. Residues Arg47 and Arg70 each contribute to the DNA site. N6-acetyllysine is present on Lys80. Residue Asp86 participates in Mg(2+) binding. Symmetric dimethylarginine; by PRMT5 occurs at positions 100 and 104. Positions 122-253 (EVEKFTKRLV…KRAVDLIQKH (132 aa)) are I-domain. 4 residues coordinate Mg(2+): Glu158, Glu160, Asp179, and Asp181. Glu158 provides a ligand contact to DNA. Ser187 is subject to Phosphoserine; by CDK2. Position 192 is a symmetric dimethylarginine; by PRMT5 (Arg192). At Ser197 the chain carries Phosphoserine. Positions 231 and 233 each coordinate DNA. Asp233 serves as a coordination point for Mg(2+). Residues Ser255, Ser293, and Ser335 each carry the phosphoserine modification. Residues 327 to 380 (RLSKSRQGSTQGRLDDFFKVTGSLSSAKRKEPEPKGAAKKKAKTGAAGKFKRGK) are disordered. Residue Thr336 is modified to Phosphothreonine. Residues 336-344 (TQGRLDDFF) are interaction with PCNA. 4 positions are modified to N6-acetyllysine: Lys354, Lys375, Lys377, and Lys380. Over residues 363 to 380 (AAKKKAKTGAAGKFKRGK) the composition is skewed to basic residues.

It belongs to the XPG/RAD2 endonuclease family. FEN1 subfamily. Interacts with PCNA. Three molecules of FEN1 bind to one PCNA trimer with each molecule binding to one PCNA monomer. PCNA stimulates the nuclease activity without altering cleavage specificity. The C-terminal domain binds EP300; can bind simultaneously to both PCNA and EP300. Interacts with DDX11; this interaction is direct and increases flap endonuclease activity of FEN1. Interacts with WDR4; regulating its endonuclease activity. Interacts with POLB. Mg(2+) is required as a cofactor. Post-translationally, acetylated by EP300. Acetylation inhibits both endonuclease and exonuclease activity. Acetylation also reduces DNA-binding activity but does not affect interaction with PCNA or EP300. Phosphorylation upon DNA damage induces relocalization to the nuclear plasma. Phosphorylation at Ser-187 by CDK2 occurs during late S-phase and results in dissociation from PCNA. In terms of processing, methylation at Arg-192 by PRMT5 impedes Ser-187 phosphorylation and increases interaction with PCNA.

It is found in the nucleus. The protein resides in the nucleolus. Its subcellular location is the nucleoplasm. It localises to the mitochondrion. Its function is as follows. Structure-specific nuclease with 5'-flap endonuclease and 5'-3' exonuclease activities involved in DNA replication and repair. During DNA replication, cleaves the 5'-overhanging flap structure that is generated by displacement synthesis when DNA polymerase encounters the 5'-end of a downstream Okazaki fragment. It enters the flap from the 5'-end and then tracks to cleave the flap base, leaving a nick for ligation. Also involved in the long patch base excision repair (LP-BER) pathway, by cleaving within the apurinic/apyrimidinic (AP) site-terminated flap. Acts as a genome stabilization factor that prevents flaps from equilibrating into structures that lead to duplications and deletions. Also possesses 5'-3' exonuclease activity on nicked or gapped double-stranded DNA, and exhibits RNase H activity. Also involved in replication and repair of rDNA and in repairing mitochondrial DNA. The polypeptide is Flap endonuclease 1 (Bos taurus (Bovine)).